We begin with the raw amino-acid sequence, 374 residues long: Succinyl-diaminopimelate desuccinylase (374 aa).

Residue His66 participates in Zn(2+) binding. Asp68 is an active-site residue. Asp99 is a binding site for Zn(2+). Glu133 serves as the catalytic Proton acceptor. Glu134, Glu162, and His348 together coordinate Zn(2+).

It belongs to the peptidase M20A family. DapE subfamily. In terms of assembly, homodimer. Zn(2+) serves as cofactor. Co(2+) is required as a cofactor.

The catalysed reaction is N-succinyl-(2S,6S)-2,6-diaminopimelate + H2O = (2S,6S)-2,6-diaminopimelate + succinate. The protein operates within amino-acid biosynthesis; L-lysine biosynthesis via DAP pathway; LL-2,6-diaminopimelate from (S)-tetrahydrodipicolinate (succinylase route): step 3/3. Its function is as follows. Catalyzes the hydrolysis of N-succinyl-L,L-diaminopimelic acid (SDAP), forming succinate and LL-2,6-diaminopimelate (DAP), an intermediate involved in the bacterial biosynthesis of lysine and meso-diaminopimelic acid, an essential component of bacterial cell walls. The chain is Succinyl-diaminopimelate desuccinylase from Coxiella burnetii (strain RSA 331 / Henzerling II).